The following is a 446-amino-acid chain: Phosphoglucosamine mutase (446 aa).

The active-site Phosphoserine intermediate is S102. S102, D241, D243, and D245 together coordinate Mg(2+). S102 is subject to Phosphoserine.

This sequence belongs to the phosphohexose mutase family. Mg(2+) serves as cofactor. Post-translationally, activated by phosphorylation.

It carries out the reaction alpha-D-glucosamine 1-phosphate = D-glucosamine 6-phosphate. In terms of biological role, catalyzes the conversion of glucosamine-6-phosphate to glucosamine-1-phosphate. The polypeptide is Phosphoglucosamine mutase (Yersinia enterocolitica serotype O:8 / biotype 1B (strain NCTC 13174 / 8081)).